A 318-amino-acid chain; its full sequence is B3 domain-containing protein At1g05930 (318 aa).

A DNA-binding region (TF-B3) is located at residues 201–293 (FNRLISNDFL…VLCFAMRQWR (93 aa)).

Its subcellular location is the nucleus. This chain is B3 domain-containing protein At1g05930, found in Arabidopsis thaliana (Mouse-ear cress).